The sequence spans 57 residues: Large ribosomal subunit protein bL32 (57 aa).

The segment covering methionine 1–arginine 16 has biased composition (basic residues). Residues methionine 1–histidine 37 are disordered. Residues alanine 21–glutamate 31 are compositionally biased toward polar residues.

This sequence belongs to the bacterial ribosomal protein bL32 family.

This Hydrogenovibrio crunogenus (strain DSM 25203 / XCL-2) (Thiomicrospira crunogena) protein is Large ribosomal subunit protein bL32.